Reading from the N-terminus, the 152-residue chain is Transcriptional regulator MraZ (152 aa).

2 SpoVT-AbrB domains span residues 5–52 (VTSI…PLHE) and 81–124 (ATEC…QDKQ).

It belongs to the MraZ family. As to quaternary structure, forms oligomers.

Its subcellular location is the cytoplasm. The protein localises to the nucleoid. The polypeptide is Transcriptional regulator MraZ (Actinobacillus pleuropneumoniae serotype 3 (strain JL03)).